The chain runs to 91 residues: Non-specific lipid-transfer protein P3 (91 aa).

Disulfide bonds link cysteine 3-cysteine 50, cysteine 13-cysteine 27, cysteine 28-cysteine 73, and cysteine 48-cysteine 87.

It localises to the secreted. In terms of biological role, plant non-specific lipid-transfer proteins transfer phospholipids as well as galactolipids across membranes. May play a role in wax or cutin deposition in the cell walls of expanding epidermal cells and certain secretory tissues. This is Non-specific lipid-transfer protein P3 from Vitis sp. (Grape).